The chain runs to 648 residues: Fidgetin-like protein 2 (648 aa).

Residues 1–36 form a disordered region; it reads MHWTPEHAQPLNQWPEQHLDVSSTTPSPAHKLELPP. Residues 10 to 27 are compositionally biased toward polar residues; it reads PLNQWPEQHLDVSSTTPS. Residues alanine 394 and 434–439 contribute to the ATP site; that span reads GCGKAL.

The protein belongs to the AAA ATPase family. It depends on Mg(2+) as a cofactor.

The protein resides in the cytoplasm. It is found in the cell cortex. It carries out the reaction ATP + H2O = ADP + phosphate + H(+). In terms of biological role, microtubule-severing enzyme that negatively regulates cell migration and wound healing. In migrating cells, targets dynamic microtubules (MTs) at the leading edge and severs them, thereby suppressing motility. Microtubule severing releases ARHGEF2 which activates RHOA, which in turn regulates focal ahesion turnover via focal adhesion kinase, as opposed to F-actin polymerization, to suppress cell motility. Negative regulator of axon regeneration that suppresses axonal growth by selectively severing dynamic MTs in the distal axon shaft and growth cone. Contributes to proper cell branching during endothelial and neuronal development. In Rattus norvegicus (Rat), this protein is Fidgetin-like protein 2 (Fignl2).